The following is a 191-amino-acid chain: Ribosomal RNA small subunit methyltransferase G (191 aa).

S-adenosyl-L-methionine-binding positions include Gly62, Phe67, Ile111 to Glu112, and Arg124.

It belongs to the methyltransferase superfamily. RNA methyltransferase RsmG family.

The protein localises to the cytoplasm. It carries out the reaction guanosine(527) in 16S rRNA + S-adenosyl-L-methionine = N(7)-methylguanosine(527) in 16S rRNA + S-adenosyl-L-homocysteine. Its function is as follows. Specifically methylates the N7 position of guanine in position 527 of 16S rRNA. This is Ribosomal RNA small subunit methyltransferase G from Rickettsia prowazekii (strain Madrid E).